A 1593-amino-acid polypeptide reads, in one-letter code: MAAAAVVVPAEWIKNWEKSGRGEFLHLCRILSENKSHDSSTYRDFQQALYELSYHVIKGNLKHEQASNVLSDISEFREDMPSILADVFCILDIETNCLEEKSKRDYFTQLVLACLYLVSDTVLKERLDPETLESLGLIKQSQQFNQKSVKIKTKLFYKQQKFNLLREENEGYAKLIAELGQDLSGSITSDLILENIKSLIGCFNLDPNRVLDVILEVFECRPEHDDFFISLLESYMSMCEPQTLCHILGFKFKFYQEPNGETPSSLYRVAAVLLQFNLIDLDDLYVHLLPADNCIMDEHKREIAEAKQIVRKLTMVVLSSEKMDEREKEKEKEEEKVEKPPDNQKLGLLEALLKIGDWQHAQNIMDQMPPYYAASHKLIALAICKLIHITIEPLYRRVGVPKGAKGSPVNALQNKRAPKQAESFEDLRRDVFNMFCYLGPHLSHDPILFAKVVRIGKSFMKEFQSDGSKQEDKEKTEVILSCLLSITDQVLLPSLSLMDCNACMSEELWGMFKTFPYQHRYRLYGQWKNETYNSHPLLVKVKAQTIDRAKYIMKRLTKENVKPSGRQIGKLSHSNPTILFDYILSQIQKYDNLITPVVDSLKYLTSLNYDVLAYCIIEALANPEKERMKHDDTTISSWLQSLASFCGAVFRKYPIDLAGLLQYVANQLKAGKSFDLLILKEVVQKMAGIEITEEMTMEQLEAMTGGEQLKAEGGYFGQIRNTKKSSQRLKDALLDHDLALPLCLLMAQQRNGVIFQEGGEKHLKLVGKLYDQCHDTLVQFGGFLASNLSTEDYIKRVPSIDVLCNEFHTPHDAAFFLSRPMYAHHISSKYDELKKSEKGSKQQHKVHKYITSCEMVMAPVHEAVVSLHVSKVWDDISPQFYATFWSLTMYDLAVPHTSYEREVNKLKVQMKAIDDNQEMPPNKKKKEKERCTALQDKLLEEEKKQMEHVQRVLQRLKLEKDNWLLAKSTKNETITKFLQLCIFPRCIFSAIDAVYCARFVELVHQQKTPNFSTLLCYDRVFSDIIYTVASCTENEASRYGRFLCCMLETVTRWHSDRATYEKECGNYPGFLTILRATGFDGGNKADQLDYENFRHVVHKWHYKLTKASVHCLETGEYTHIRNILIVLTKILPWYPKVLNLGQALERRVHKICQEEKEKRPDLYALAMGYSGQLKSRKSYMIPENEFHHKDPPPRNAVASVQNGPGGGPSSSSIGSASKSDESSTEETDKSRERSQCGVKAVNKASSTTPKGNSSNGNSGSNSNKAVKENDKEKGKEKEKEKKEKTPATTPEARVLGKDGKEKPKEERPNKDEKARETKERTPKSDKEKEKFKKEEKAKDEKFKTTVPNAESKSTQEREREKEPSRERDIAKEMKSKENVKGGEKTPVSGSLKSPVPRSDIPEPEREQKRRKIDTHPSPSHSSTVKDSLIELKESSAKLYINHTPPPLSKSKEREMDKKDLDKSRERSREREKKDEKDRKERKRDHSNNDREVPPDLTKRRKEENGTMGVSKHKSESPCESPYPNEKDKEKNKSKSSGKEKGSDSFKSEKMDKISSGGKKESRHDKEKIEKKEKRDSSGGKEEKKHHKSSDKHR.

An anchor domain; interaction with THOC5 and THOC7 region spans residues Met1–Asn163. Residues Leu164–Ser534 are bow domain; interaction with THOC1 dock domain and THOC3. The interval Lys322–Pro341 is disordered. The MIF4G domain; interaction with THOC3 and DDX39B stretch occupies residues His535–Met686. Residues Ala687–Lys1174 form a stern domain region. Positions His896 to Leu965 form a coiled coil. The Nuclear localization signal motif lies at Lys923 to Lys928. The charged domain stretch occupies residues Ser1175–Arg1593. Residues Asn1184–Arg1593 are disordered. The segment covering Lys1218–Ser1234 has biased composition (basic and acidic residues). Residue Ser1222 is modified to Phosphoserine. Residues Gly1251–Asn1263 show a composition bias toward low complexity. 3 stretches are compositionally biased toward basic and acidic residues: residues Ala1265–Thr1285, Val1294–Lys1343, and Ser1353–Glu1383. Thr1385 carries the phosphothreonine modification. A phosphoserine mark is found at Ser1390, Ser1393, and Ser1417. The span at Pro1416–Lys1425 shows a compositional bias: polar residues. The residue at position 1443 (Thr1443) is a Phosphothreonine. The segment covering Lys1449–Asn1504 has biased composition (basic and acidic residues). Phosphoserine is present on residues Ser1450, Ser1486, and Ser1516. Basic and acidic residues predominate over residues Asn1524–Glu1582. The span at Lys1583–Arg1593 shows a compositional bias: basic residues.

Belongs to the THOC2 family. Component of the THO subcomplex, which is composed of THOC1, THOC2, THOC3, THOC5, THOC6 and THOC7. The THO subcomplex interacts with DDX39B to form the THO-DDX39B complex which multimerizes into a 28-subunit tetrameric assembly. Component of the transcription/export (TREX) complex at least composed of ALYREF/THOC4, DDX39B, SARNP/CIP29, CHTOP and the THO subcomplex; in the complex interacts with THOC1, THOC3, THOC5, THOC7 and DDX39B. TREX seems to have a dynamic structure involving ATP-dependent remodeling. Interacts with POLDIP3 and ZC3H11A. Expressed in the hippocampus and the cerebral cortex.

It localises to the nucleus. The protein localises to the nucleus speckle. The protein resides in the cytoplasm. In terms of biological role, component of the THO subcomplex of the TREX complex which is thought to couple mRNA transcription, processing and nuclear export, and which specifically associates with spliced mRNA and not with unspliced pre-mRNA. Required for efficient export of polyadenylated RNA and spliced mRNA. The THOC1-THOC2-THOC3 core complex alone is sufficient to bind export factor NXF1-NXT1 and promote ATPase activity of DDX39B; in the complex THOC2 is the only component that directly interacts with DDX39B. TREX is recruited to spliced mRNAs by a transcription-independent mechanism, binds to mRNA upstream of the exon-junction complex (EJC) and is recruited in a splicing- and cap-dependent manner to a region near the 5' end of the mRNA where it functions in mRNA export to the cytoplasm via the TAP/NXF1 pathway. Required for NXF1 localization to the nuclear rim. THOC2 (and probably the THO complex) is involved in releasing mRNA from nuclear speckle domains. (Microbial infection) The TREX complex is essential for the export of Kaposi's sarcoma-associated herpesvirus (KSHV) intronless mRNAs and infectious virus production. The chain is THO complex subunit 2 (THOC2) from Homo sapiens (Human).